The following is a 282-amino-acid chain: 1-deoxy-11-beta-hydroxypentalenate dehydrogenase (282 aa).

12–36 (GAASGIGLALSARFARAGAGVVMAD) provides a ligand contact to NAD(+). Residue Ser144 coordinates substrate. The active-site Proton acceptor is the Tyr157. Residue Lys161 coordinates NAD(+). The tract at residues 258-282 (PPPSPEEELWPVPKTTTATTATTKH) is disordered. A compositionally biased stretch (low complexity) spans 267–282 (WPVPKTTTATTATTKH).

The protein belongs to the short-chain dehydrogenases/reductases (SDR) family.

It catalyses the reaction 1-deoxy-11beta-hydroxypentalenate + NAD(+) = 1-deoxy-11-oxopentalenate + NADH + H(+). Its pathway is antibiotic biosynthesis; pentalenolactone biosynthesis. Functionally, catalyzes the oxidation of 1-deoxy-11-beta-hydroxypentalenic acid to 1-deoxy-11-oxopentalenic acid in the biosynthesis of pentalenolactone antibiotic. The sequence is that of 1-deoxy-11-beta-hydroxypentalenate dehydrogenase (pntF) from Streptomyces arenae.